Consider the following 64-residue polypeptide: Fatty acid synthase (64 aa).

The Carrier domain maps to 1–64; sequence AEGEGQRDLL…VLSMREVRQL (64 aa). S38 carries the post-translational modification O-(pantetheine 4'-phosphoryl)serine; alternate. S38 is subject to Phosphoserine; alternate.

In terms of assembly, homodimer which is arranged in a head to tail fashion. Interacts with CEACAM1; this interaction is insulin and phosphorylation-dependent; reduces fatty-acid synthase activity.

The protein localises to the cytoplasm. The protein resides in the melanosome. It carries out the reaction acetyl-CoA + n malonyl-CoA + 2n NADPH + 2n H(+) = a long-chain fatty acid + (n+1) CoA + n CO2 + 2n NADP(+).. In terms of biological role, fatty acid synthetase catalyzes the formation of long-chain fatty acids from acetyl-CoA, malonyl-CoA and NADPH. This multifunctional protein has 7 catalytic activities as an acyl carrier protein. This chain is Fatty acid synthase (FASN), found in Oryctolagus cuniculus (Rabbit).